Reading from the N-terminus, the 367-residue chain is Heme A synthase (367 aa).

The next 8 helical transmembrane spans lie at 26-46, 111-131, 139-159, 174-194, 212-232, 272-292, 305-325, and 327-347; these read IRGW…VGGA, LLAR…WVTG, LPLL…WWMV, LATH…IYRG, AAVI…VAGL, FVHR…MIAA, SVLL…TLLL, and VPIG…GFAI. Histidine 274 serves as a coordination point for heme. Histidine 335 contributes to the heme binding site.

It belongs to the COX15/CtaA family. Type 2 subfamily. Interacts with CtaB. It depends on heme b as a cofactor.

It is found in the cell membrane. The enzyme catalyses Fe(II)-heme o + 2 A + H2O = Fe(II)-heme a + 2 AH2. The protein operates within porphyrin-containing compound metabolism; heme A biosynthesis; heme A from heme O: step 1/1. In terms of biological role, catalyzes the conversion of heme O to heme A by two successive hydroxylations of the methyl group at C8. The first hydroxylation forms heme I, the second hydroxylation results in an unstable dihydroxymethyl group, which spontaneously dehydrates, resulting in the formyl group of heme A. The chain is Heme A synthase from Sinorhizobium medicae (strain WSM419) (Ensifer medicae).